The primary structure comprises 325 residues: NADH-quinone oxidoreductase subunit H (325 aa).

8 helical membrane-spanning segments follow: residues 11–31 (ILIS…CGAF), 81–101 (VIFT…FAIV), 114–134 (IGIL…LFAG), 149–169 (ASAQ…GVVA), 186–206 (MWNV…GVAV), 237–257 (FFVG…TLFF), 265–285 (LPPF…FILI), and 304–324 (VCLP…LYNA).

It belongs to the complex I subunit 1 family. In terms of assembly, NDH-1 is composed of 13 different subunits. Subunits NuoA, H, J, K, L, M, N constitute the membrane sector of the complex.

Its subcellular location is the cell inner membrane. It catalyses the reaction a quinone + NADH + 5 H(+)(in) = a quinol + NAD(+) + 4 H(+)(out). Its function is as follows. NDH-1 shuttles electrons from NADH, via FMN and iron-sulfur (Fe-S) centers, to quinones in the respiratory chain. The immediate electron acceptor for the enzyme in this species is believed to be ubiquinone. Couples the redox reaction to proton translocation (for every two electrons transferred, four hydrogen ions are translocated across the cytoplasmic membrane), and thus conserves the redox energy in a proton gradient. This subunit may bind ubiquinone. The protein is NADH-quinone oxidoreductase subunit H of Serratia proteamaculans (strain 568).